Here is a 289-residue protein sequence, read N- to C-terminus: WUSCHEL-related homeobox 1 (289 aa).

The segment covering 1–11 (MDHMQQQQRQQ) has biased composition (low complexity). Residues 1-34 (MDHMQQQQRQQVGGGGGEEVAGRGGVPVCRPSGT) form a disordered region. Gly residues predominate over residues 12–25 (VGGGGGEEVAGRGG). A DNA-binding region (homeobox; WUS-type) is located at residues 31–96 (PSGTRWTPTT…NHKARERQKK (66 aa)).

Belongs to the WUS homeobox family. As to quaternary structure, interacts with TPR1, TPR2 and TPR3. Expressed in young leaf primordia. Expressed in branch an floral meristems. Transiently expressed in the shoot apex.

It is found in the nucleus. Functionally, transcription repressor required for the formation and development of tiller buds and panicles. Required for tiller formation and female sterility. Required for the early developmental stages of axillary meristem formation. Plays a role in maintaining the axillary premeristem zone and in promoting the formation of the axillary meristem by promoting OSH1 expression. Does not seem to be involved in maintenance of the shoot apical meristem (SAM). This Oryza sativa subsp. japonica (Rice) protein is WUSCHEL-related homeobox 1.